The sequence spans 118 residues: Ribonuclease P protein component (118 aa).

Belongs to the RnpA family. As to quaternary structure, consists of a catalytic RNA component (M1 or rnpB) and a protein subunit.

The enzyme catalyses Endonucleolytic cleavage of RNA, removing 5'-extranucleotides from tRNA precursor.. In terms of biological role, RNaseP catalyzes the removal of the 5'-leader sequence from pre-tRNA to produce the mature 5'-terminus. It can also cleave other RNA substrates such as 4.5S RNA. The protein component plays an auxiliary but essential role in vivo by binding to the 5'-leader sequence and broadening the substrate specificity of the ribozyme. This Photobacterium profundum (strain SS9) protein is Ribonuclease P protein component.